The primary structure comprises 191 residues: Gastrokine-3 (191 aa).

A signal peptide spans 1-30 (MPLHSLERDNMRRLIAPSILVTVFLVPALA). N-linked (GlcNAc...) asparagine glycosylation occurs at asparagine 33. Positions 63 to 155 (NSVQSEWDGV…LCRAVPTYFA (93 aa)) constitute a BRICHOS domain. A disulfide bridge connects residues cysteine 90 and cysteine 147.

It belongs to the gastrokine family. Expressed in stomach. Present in mucus cells at the base of antral glands, and Brunner glands of the duodenum. Present at lower levels in the mucus neck cell region of the fundus (at protein level).

The protein localises to the secreted. In terms of biological role, inhibits gastric epithelial cell proliferation. This chain is Gastrokine-3 (Gkn3), found in Mus musculus (Mouse).